Here is a 453-residue protein sequence, read N- to C-terminus: Probable phenylalanine--tRNA ligase, mitochondrial (453 aa).

Residues 1 to 27 (MLLTLRVQGARHWLKSTRCLASSAAPA) constitute a mitochondrion transit peptide. Substrate-binding positions include 142 to 145 (TAHQ), arginine 164, 171 to 173 (THY), 178 to 180 (QAD), glutamate 285, and phenylalanine 310. The 98-residue stretch at 356-453 (SHYPQCTNDL…SVDSFNVQIR (98 aa)) folds into the FDX-ACB domain.

The protein belongs to the class-II aminoacyl-tRNA synthetase family.

It localises to the mitochondrion matrix. The enzyme catalyses tRNA(Phe) + L-phenylalanine + ATP = L-phenylalanyl-tRNA(Phe) + AMP + diphosphate + H(+). Functionally, is responsible for the charging of tRNA(Phe) with phenylalanine in mitochondrial translation. This Drosophila melanogaster (Fruit fly) protein is Probable phenylalanine--tRNA ligase, mitochondrial.